The primary structure comprises 441 residues: Histidinol dehydrogenase (441 aa).

NAD(+)-binding residues include Y136, Q197, and N220. Substrate contacts are provided by S243, Q265, and H268. 2 residues coordinate Zn(2+): Q265 and H268. Catalysis depends on proton acceptor residues E333 and H334. The substrate site is built by H334, D367, E421, and H426. D367 is a binding site for Zn(2+). Position 426 (H426) interacts with Zn(2+).

Belongs to the histidinol dehydrogenase family. The cofactor is Zn(2+).

It catalyses the reaction L-histidinol + 2 NAD(+) + H2O = L-histidine + 2 NADH + 3 H(+). The protein operates within amino-acid biosynthesis; L-histidine biosynthesis; L-histidine from 5-phospho-alpha-D-ribose 1-diphosphate: step 9/9. Catalyzes the sequential NAD-dependent oxidations of L-histidinol to L-histidinaldehyde and then to L-histidine. The polypeptide is Histidinol dehydrogenase (Pseudomonas putida (strain ATCC 47054 / DSM 6125 / CFBP 8728 / NCIMB 11950 / KT2440)).